A 648-amino-acid chain; its full sequence is Transmembrane 9 superfamily member 8 (648 aa).

A signal peptide spans 1–33; the sequence is MAMEFLRSSRRILESSGCAIALIFLLFIHGAHS. Residues 34–285 are Lumenal-facing; that stretch reads FYLPGVAPQD…YLLMSDNQIH (252 aa). Residues 286-306 traverse the membrane as a helical segment; it reads WFSIVNSLMIVLFLSGMVAMI. At 307–355 the chain is on the cytoplasmic side; it reads MLRTLYRDISRYNELETQEEAQEETGWKLVHGDVFRLPTNSDLLCVYVG. The chain crosses the membrane as a helical span at residues 356-376; that stretch reads TGVQCLGMVFVTMIFAMLGFL. Residues 377–381 are Lumenal-facing; that stretch reads SPSNR. Residues 382-402 traverse the membrane as a helical segment; that stretch reads GGLMTAMLLLWVFMGLFAGYA. Over 403–422 the chain is Cytoplasmic; sequence SSRLYKMFKGTEWKRIAFRT. Residues 423–443 form a helical membrane-spanning segment; it reads AFLFPAVVSAIFFVLNALIWG. The Lumenal portion of the chain corresponds to 444–455; the sequence is QKSSGAVPFGTM. A helical membrane pass occupies residues 456-476; it reads FALIFLWFGISVPLVFVGGYI. The Cytoplasmic segment spans residues 477-506; sequence GFKKPAADDPVKTNKIPRQIPEQAWYMNPV. A helical membrane pass occupies residues 507–527; it reads FSILIGGILPFGAVFIELFFI. Topologically, residues 528-538 are lumenal; sequence LTSIWLNQFYY. A helical transmembrane segment spans residues 539–559; it reads IFGFLFLVFVILIVTCAEITV. At 560-577 the chain is on the cytoplasmic side; it reads VLCYFQLCSEDYLWWWRS. A helical transmembrane segment spans residues 578–598; the sequence is YLTSGSSALYLFLYATFYFFT. Topologically, residues 599–604 are lumenal; that stretch reads KLQITK. The chain crosses the membrane as a helical span at residues 605-625; the sequence is LVSAMLYFGYMLIASYAFFVL. The Cytoplasmic portion of the chain corresponds to 626-648; the sequence is TGTIGFYACLWFTRLIYSSVKID. An Endoplasmic reticulum export signal motif is present at residues 637–642; sequence FTRLIY. A Golgi retention signal motif is present at residues 646–648; that stretch reads KID.

This sequence belongs to the nonaspanin (TM9SF) (TC 9.A.2) family.

The protein resides in the endosome membrane. It is found in the golgi apparatus membrane. The protein is Transmembrane 9 superfamily member 8 of Arabidopsis thaliana (Mouse-ear cress).